A 497-amino-acid chain; its full sequence is Replication factor C large subunit (497 aa).

50 to 57 lines the ATP pocket; the sequence is GPAGVGKT. Positions 428–455 are enriched in basic and acidic residues; sequence KRRSLGRDEGKAFFEKKPKKQTPDKKQM. The tract at residues 428-497 is disordered; it reads KRRSLGRDEG…AKPQKTLFDF (70 aa). Residues 456-465 are compositionally biased toward polar residues; sequence DLTQIINSTP. Positions 466-476 are enriched in basic and acidic residues; sequence QEDKVEKKETE.

Belongs to the activator 1 small subunits family. RfcL subfamily. In terms of assembly, heteromultimer composed of small subunits (RfcS) and large subunits (RfcL).

Part of the RFC clamp loader complex which loads the PCNA sliding clamp onto DNA. The sequence is that of Replication factor C large subunit from Methanococcoides burtonii (strain DSM 6242 / NBRC 107633 / OCM 468 / ACE-M).